Reading from the N-terminus, the 431-residue chain is NADH-quinone oxidoreductase subunit D 2 (431 aa).

Residues M1 to A27 are disordered.

This sequence belongs to the complex I 49 kDa subunit family. As to quaternary structure, NDH-1 is composed of 14 different subunits. Subunits NuoB, C, D, E, F, and G constitute the peripheral sector of the complex.

The protein resides in the cell inner membrane. The catalysed reaction is a quinone + NADH + 5 H(+)(in) = a quinol + NAD(+) + 4 H(+)(out). In terms of biological role, NDH-1 shuttles electrons from NADH, via FMN and iron-sulfur (Fe-S) centers, to quinones in the respiratory chain. The immediate electron acceptor for the enzyme in this species is believed to be ubiquinone. Couples the redox reaction to proton translocation (for every two electrons transferred, four hydrogen ions are translocated across the cytoplasmic membrane), and thus conserves the redox energy in a proton gradient. This is NADH-quinone oxidoreductase subunit D 2 from Anaeromyxobacter sp. (strain Fw109-5).